The following is a 428-amino-acid chain: Histidine--tRNA ligase (428 aa).

It belongs to the class-II aminoacyl-tRNA synthetase family. As to quaternary structure, homodimer.

It localises to the cytoplasm. The enzyme catalyses tRNA(His) + L-histidine + ATP = L-histidyl-tRNA(His) + AMP + diphosphate + H(+). In Thermosynechococcus vestitus (strain NIES-2133 / IAM M-273 / BP-1), this protein is Histidine--tRNA ligase.